Here is a 331-residue protein sequence, read N- to C-terminus: Aspartate carbamoyltransferase catalytic subunit (331 aa).

2 residues coordinate carbamoyl phosphate: arginine 62 and threonine 63. Position 90 (lysine 90) interacts with L-aspartate. Residues arginine 112, histidine 145, and glutamine 148 each contribute to the carbamoyl phosphate site. Residues arginine 185 and arginine 246 each contribute to the L-aspartate site. Carbamoyl phosphate is bound by residues glycine 287 and proline 288.

It belongs to the aspartate/ornithine carbamoyltransferase superfamily. ATCase family. In terms of assembly, heterododecamer (2C3:3R2) of six catalytic PyrB chains organized as two trimers (C3), and six regulatory PyrI chains organized as three dimers (R2).

It catalyses the reaction carbamoyl phosphate + L-aspartate = N-carbamoyl-L-aspartate + phosphate + H(+). Its pathway is pyrimidine metabolism; UMP biosynthesis via de novo pathway; (S)-dihydroorotate from bicarbonate: step 2/3. In terms of biological role, catalyzes the condensation of carbamoyl phosphate and aspartate to form carbamoyl aspartate and inorganic phosphate, the committed step in the de novo pyrimidine nucleotide biosynthesis pathway. This is Aspartate carbamoyltransferase catalytic subunit from Synechocystis sp. (strain ATCC 27184 / PCC 6803 / Kazusa).